A 298-amino-acid polypeptide reads, in one-letter code: Zinc transport system membrane protein TroC (298 aa).

8 helical membrane-spanning segments follow: residues 16 to 36, 41 to 61, 68 to 88, 97 to 117, 144 to 164, 187 to 207, 229 to 249, and 255 to 275; these read VVLG…FAVL, LFGD…FLLT, ILLL…LMVM, GAQG…LTHV, VLLI…FWKE, FMLT…VGVI, VLCA…SVVS, and LSTG…SIML.

Belongs to the ABC-3 integral membrane protein family.

The protein resides in the cell membrane. Its function is as follows. Part of an ATP-driven transport system TroABCD for zinc. This Treponema pallidum (strain Nichols) protein is Zinc transport system membrane protein TroC (troC).